The following is a 315-amino-acid chain: MAFPEPKPRPPELPQKRLKTLDCGQGAVRAVRFNVDGNYCLTCGSDKTLKLWNPLRGTLLRTYSGHGYEVLDAAGSFDNSSLCSGGGDKAVVLWDVASGQVVRKFRGHAGKVNTVQFNEEATVILSGSIDSSIRCWDCRSRRPEPVQTLDEARDGVSSVKVSDHEILAGSVDGRVRRYDLRMGQLFSDYVGSPITCTCFSRDGQCTLVSSLDSTLRLLDKDTGELLGEYKGHKNQEYKLDCCLSERDTHVVSCSEDGKVFFWDLVEGALALALPVGSGVVQSLAYHPTEPCLLTAMGGSVQCWREEAYEAEDGAG.

7 WD repeats span residues 23-62, 65-104, 107-146, 151-188, 190-228, 231-272, and 275-313; these read CGQGAVRAVRFNVDGNYCLTCGSDKTLKLWNPLRGTLLRT, GHGYEVLDAAGSFDNSSLCSGGGDKAVVLWDVASGQVVRK, GHAGKVNTVQFNEEATVILSGSIDSSIRCWDCRSRRPEPV, EARDGVSSVKVSDHEILAGSVDGRVRRYDLRMGQLFSD, VGSPITCTCFSRDGQCTLVSSLDSTLRLLDKDTGELLGE, GHKN…LALA, and VGSGVVQSLAYHPTEPCLLTAMGGSVQCWREEAYEAEDG.

This sequence belongs to the WD repeat MORG1 family. As to quaternary structure, interacts with EGLN3/PHD3. Interacts with ERK signaling proteins MAP2K1/MEK1, MAP2K2/MEK2, LAMTOR3, ARAF/Raf-1, MAPK1/ERK2 and MAPK3/ERK1. Identified in the spliceosome C complex. Interacts with PARD6B and CRB3. Interacts strongly with GTP-bound RRAGA but not with inactive GDP-bound. Interacts with p62/SQSTM1.

The protein resides in the cytoplasm. It localises to the lysosome. Its subcellular location is the nucleus. Its function is as follows. Molecular scaffold protein for various multimeric protein complexes. Acts as a module in the assembly of a multicomponent scaffold for the ERK pathway, linking ERK responses to specific agonists. At low concentrations it enhances ERK activation, whereas high concentrations lead to the inhibition of ERK activation. Also involved in response to hypoxia by acting as a negative regulator of HIF1A/HIF-1-alpha via its interaction with EGLN3/PHD3. May promote degradation of HIF1A. May act by recruiting signaling complexes to a specific upstream activator. May also be involved in pre-mRNA splicing. Participates in tight junction development by regulating apico-basal polarity, a key step in tissue development and organization. Mechanistically, regulates the translocation of PAR6-aPKC from the cytoplasm to the apical surface by acting as an adapter between PARD6B AND CRB3. Also acts as a negative regulator of mTORC1 under nutrient-rich conditions by binding to the active Rag GTPases to inhibit mTORC1 localization to the lysosome and phosphorylation of downstream targets. This facilitates constitutive basal autophagy during nutrient availability. This chain is WD repeat domain-containing protein 83 (WDR83), found in Homo sapiens (Human).